The sequence spans 39 residues: Decorsin (39 aa).

The segment at 27-38 is high affinity binding domain; sequence CRFPRGDADPYC. Residues 31-33 carry the Cell attachment site motif; sequence RGD.

Belongs to the ornatin family.

It is found in the secreted. Inhibits fibrinogen interaction with platelet receptors expressed on glycoprotein IIb-IIIa complex. May prevent blood from clotting during either feeding and/or storage of ingested blood. The protein is Decorsin of Macrobdella decora (North American leech).